Here is a 245-residue protein sequence, read N- to C-terminus: MPLGLKPTCSMCKTNTSSMWKKGSQGEILCNNCSGKSSTAAGGNNNNNSSSSTSGSSSYTGTTFASTSTSQQSNGGNTKQSKQEIHRRSARLRNTKYKATPAAEKKVSTKGKGRRHIFKLKNGLYYQIGDVVSVVDEEDGKTYYAQVRGFIQDQYCEKSAALTWLIPTLSSPKDGFDPSTYIIGPDEDLPRKMECLEFVCHAPSEYFKSRSSPFPTIPTRPEKGFIWTHIGPTPAISIKETMANH.

The GATA-type zinc finger occupies 9–33 (CSMCKTNTSSMWKKGSQGEILCNNC). Low complexity predominate over residues 39-70 (TAAGGNNNNNSSSSTSGSSSYTGTTFASTSTS). A disordered region spans residues 39–110 (TAAGGNNNNN…PAAEKKVSTK (72 aa)). Residues 71 to 80 (QQSNGGNTKQ) are compositionally biased toward polar residues.

Its subcellular location is the nucleus. Component of some chromatin complex recruited to chromatin sites methylated 'Lys-4' of histone H3 (H3K4me), with a preference for trimethylated form (H3K4me3). This chain is GATA zinc finger domain-containing protein 1 (gatad1), found in Xenopus laevis (African clawed frog).